A 208-amino-acid polypeptide reads, in one-letter code: Large ribosomal subunit protein uL3 (208 aa).

Positions 116 to 148 are disordered; it reads GFQGVIKRHGQSRGPMAHGSRYHRRPGSMGPVA.

Belongs to the universal ribosomal protein uL3 family. As to quaternary structure, part of the 50S ribosomal subunit. Forms a cluster with proteins L14 and L19.

Functionally, one of the primary rRNA binding proteins, it binds directly near the 3'-end of the 23S rRNA, where it nucleates assembly of the 50S subunit. This Streptococcus pyogenes serotype M12 (strain MGAS2096) protein is Large ribosomal subunit protein uL3.